The primary structure comprises 107 residues: MTHTHDHEHDHNHEPDYITLVDENGNESLFQILITIDGQEEFGKNYVVLQPTEFEEDEQGLIDVLAYSFTENADGTEGDLQPIPEDAEDEWDMIEEVFNSFMDEQED.

The protein belongs to the UPF0473 family.

The chain is UPF0473 protein llmg_0152 from Lactococcus lactis subsp. cremoris (strain MG1363).